The sequence spans 109 residues: uncharacterized protein (109 aa).

This is an uncharacterized protein from Treponema pallidum (strain Nichols).